Consider the following 187-residue polypeptide: Putative lipoprotein LppJ (187 aa).

A signal peptide spans 1–28; that stretch reads MPHSTADRRLRLTRQALLAAAVAPLLAG. A lipid anchor (N-palmitoyl cysteine) is attached at Cys29. Residue Cys29 is the site of S-diacylglycerol cysteine attachment.

The protein resides in the cell membrane. This chain is Putative lipoprotein LppJ (lppJ), found in Mycobacterium bovis (strain ATCC BAA-935 / AF2122/97).